The primary structure comprises 305 residues: Thioredoxin reductase (305 aa).

FAD is bound at residue 28-35 (LGIETSSQ). Cysteines 129 and 132 form a disulfide. 272-281 (DCCDWIYRQA) lines the FAD pocket.

It belongs to the class-II pyridine nucleotide-disulfide oxidoreductase family. In terms of assembly, homodimer. Requires FAD as cofactor.

It is found in the cytoplasm. It carries out the reaction [thioredoxin]-dithiol + NADP(+) = [thioredoxin]-disulfide + NADPH + H(+). The protein is Thioredoxin reductase (TRXB) of Spironucleus barkhanus.